A 478-amino-acid polypeptide reads, in one-letter code: Protein nucleotidyltransferase YdiU (478 aa).

G84, G86, R87, K107, D119, G120, R170, and R177 together coordinate ATP. The active-site Proton acceptor is the D246. N247 and D256 together coordinate Mg(2+). An ATP-binding site is contributed by D256.

Belongs to the SELO family. Requires Mg(2+) as cofactor. Mn(2+) serves as cofactor.

The enzyme catalyses L-seryl-[protein] + ATP = 3-O-(5'-adenylyl)-L-seryl-[protein] + diphosphate. It catalyses the reaction L-threonyl-[protein] + ATP = 3-O-(5'-adenylyl)-L-threonyl-[protein] + diphosphate. The catalysed reaction is L-tyrosyl-[protein] + ATP = O-(5'-adenylyl)-L-tyrosyl-[protein] + diphosphate. It carries out the reaction L-histidyl-[protein] + UTP = N(tele)-(5'-uridylyl)-L-histidyl-[protein] + diphosphate. The enzyme catalyses L-seryl-[protein] + UTP = O-(5'-uridylyl)-L-seryl-[protein] + diphosphate. It catalyses the reaction L-tyrosyl-[protein] + UTP = O-(5'-uridylyl)-L-tyrosyl-[protein] + diphosphate. Functionally, nucleotidyltransferase involved in the post-translational modification of proteins. It can catalyze the addition of adenosine monophosphate (AMP) or uridine monophosphate (UMP) to a protein, resulting in modifications known as AMPylation and UMPylation. This Shigella boydii serotype 18 (strain CDC 3083-94 / BS512) protein is Protein nucleotidyltransferase YdiU.